Reading from the N-terminus, the 139-residue chain is D-ribose pyranase (139 aa).

The active-site Proton donor is His-20. Residues Asp-28, His-106, and 128-130 (YAN) contribute to the substrate site.

It belongs to the RbsD / FucU family. RbsD subfamily. As to quaternary structure, homodecamer.

The protein resides in the cytoplasm. It catalyses the reaction beta-D-ribopyranose = beta-D-ribofuranose. Its pathway is carbohydrate metabolism; D-ribose degradation; D-ribose 5-phosphate from beta-D-ribopyranose: step 1/2. In terms of biological role, catalyzes the interconversion of beta-pyran and beta-furan forms of D-ribose. This is D-ribose pyranase from Cronobacter sakazakii (strain ATCC BAA-894) (Enterobacter sakazakii).